The sequence spans 455 residues: Phosphoglucosamine mutase (455 aa).

The active-site Phosphoserine intermediate is Ser-104. Mg(2+) contacts are provided by Ser-104, Asp-243, Asp-245, and Asp-247. Ser-104 carries the phosphoserine modification.

The protein belongs to the phosphohexose mutase family. Mg(2+) is required as a cofactor. Activated by phosphorylation.

The enzyme catalyses alpha-D-glucosamine 1-phosphate = D-glucosamine 6-phosphate. Catalyzes the conversion of glucosamine-6-phosphate to glucosamine-1-phosphate. This chain is Phosphoglucosamine mutase, found in Synechococcus sp. (strain CC9311).